Consider the following 209-residue polypeptide: High frequency lysogenization protein HflD homolog (209 aa).

This sequence belongs to the HflD family.

It localises to the cytoplasm. The protein resides in the cell inner membrane. This Saccharophagus degradans (strain 2-40 / ATCC 43961 / DSM 17024) protein is High frequency lysogenization protein HflD homolog.